The sequence spans 247 residues: UPF0273 protein PF1931 (247 aa).

Residues 3 to 247 (RRVKTGIPGM…VLKRGRIYEL (245 aa)) enclose the KaiC domain. Residue 30-37 (GGPGTGKS) participates in ATP binding.

This sequence belongs to the UPF0273 family.

This is UPF0273 protein PF1931 from Pyrococcus furiosus (strain ATCC 43587 / DSM 3638 / JCM 8422 / Vc1).